Reading from the N-terminus, the 53-residue chain is Large ribosomal subunit protein bL32c (53 aa).

It belongs to the bacterial ribosomal protein bL32 family.

The protein localises to the plastid. The protein resides in the chloroplast. This Guillardia theta (Cryptophyte) protein is Large ribosomal subunit protein bL32c (rpl32).